The chain runs to 253 residues: 5'/3'-nucleotidase SurE (253 aa).

Residues Asp-8, Asp-9, Ser-39, and Asn-92 each contribute to the a divalent metal cation site.

This sequence belongs to the SurE nucleotidase family. Requires a divalent metal cation as cofactor.

It localises to the cytoplasm. It catalyses the reaction a ribonucleoside 5'-phosphate + H2O = a ribonucleoside + phosphate. It carries out the reaction a ribonucleoside 3'-phosphate + H2O = a ribonucleoside + phosphate. The enzyme catalyses [phosphate](n) + H2O = [phosphate](n-1) + phosphate + H(+). Nucleotidase with a broad substrate specificity as it can dephosphorylate various ribo- and deoxyribonucleoside 5'-monophosphates and ribonucleoside 3'-monophosphates with highest affinity to 3'-AMP. Also hydrolyzes polyphosphate (exopolyphosphatase activity) with the preference for short-chain-length substrates (P20-25). Might be involved in the regulation of dNTP and NTP pools, and in the turnover of 3'-mononucleotides produced by numerous intracellular RNases (T1, T2, and F) during the degradation of various RNAs. The protein is 5'/3'-nucleotidase SurE of Shigella flexneri serotype 5b (strain 8401).